Reading from the N-terminus, the 142-residue chain is Coiled-coil-helix-coiled-coil-helix domain-containing protein 10, mitochondrial (142 aa).

The transit peptide at 1–16 directs the protein to the mitochondrion; the sequence is MPRGSRSAASRPASRP. The segment covering 1 to 20 has biased composition (low complexity); the sequence is MPRGSRSAASRPASRPAAPS. Disordered regions lie at residues 1–45 and 68–97; these read MPRG…PGLM and ALTGAFSGGSSEPSQPAVQQAPTPAAPQPL. Over residues 21 to 39 the composition is skewed to pro residues; sequence AHPPAHPPPSAAAPAPAPS. Over residues 80–90 the composition is skewed to low complexity; it reads PSQPAVQQAPT. Residues 99-140 enclose the CHCH domain; it reads MGPCAYEIRQFLDCSTTQSDLSLCEGFSEALKQCKYYHGLSS. 2 short sequence motifs (cx9C motif) span residues 102-112 and 122-132; these read CAYEIRQFLDC and CEGFSEALKQC. 2 disulfides stabilise this stretch: Cys102–Cys132 and Cys112–Cys122.

Ubiquitously expressed. Higher expression is observed in heart and liver.

It localises to the mitochondrion intermembrane space. Its function is as follows. May be involved in the maintenance of mitochondrial organization and mitochondrial cristae structure. The polypeptide is Coiled-coil-helix-coiled-coil-helix domain-containing protein 10, mitochondrial (CHCHD10) (Homo sapiens (Human)).